The chain runs to 742 residues: MTTIKTSNLGFPRLGRKREWKKAIESYWAKKISKEELDQTLTDLHKENLLLQKYYHLDSIPVGDFSLYDHILDTSLLFNIIPERFQGRTIDDDLLFDIARGNKDHVASALIKWFNTNYHYIVPEWDNVEPKVSRNVLLDRFKYAQSLNVNAHPVIVGPITFVKLSKGGHQTFEEKVKTLLPLYKEVFESLIDAGAEYIQVDEPILVTDDSESYENITREAYDYFEKAGVAKKLVIQTYFERAHLKFLSSLPVGGLGLDFVHDNGYNLKQIEAGDFDKSKTLYAGIIDGRNVWASDIEAKKVLIDKLLAHTNELVIQPSSSLLHVPVSLDDETLDTSVGEGLSFATEKLDELDALRRLFNQNDSVKYDKLKARYERFQNQSFKNLDYDFESVRTSRQSPFAQRIEQQQKRLNLPDLPTTTIGSFPQSREVRKYRADWKNKRITDEAYETFLKNEIARWIKIQEDIGLDVLVHGEFERNDMVEFFGEKLQGFLVTKFGWVQSYGSRAVKPPIIYGDVKWTAPLTVDETVYAQSLTDKPVKGMLTGPVTILNWSFERVDLPRKVVQDQIALAINEEVLALEAAGIKVIQVDEPALREGLPLRSEYHEQYLKDAVLSFKLATSSVRDETQIHTHMCYSQFGQIIHAIHDLDADVISIETSRSHGDLIKDFEDINYDLGIGLGVYDIHSPRIPTKEEITTAINRSLQQIDRSLFWVNPDCGLKTRKEEEVKDALTVLVNAVKAKRQE.

Residues 18–21 (REWK) and lysine 112 each bind 5-methyltetrahydropteroyltri-L-glutamate. L-homocysteine is bound by residues 420–422 (IGS) and glutamate 473. Residues 420 to 422 (IGS) and glutamate 473 each bind L-methionine. Position 550 (tryptophan 550) interacts with 5-methyltetrahydropteroyltri-L-glutamate. Aspartate 588 is an L-homocysteine binding site. Aspartate 588 serves as a coordination point for L-methionine. Glutamate 594 serves as a coordination point for 5-methyltetrahydropteroyltri-L-glutamate. Positions 630, 632, and 654 each coordinate Zn(2+). Histidine 683 (proton donor) is an active-site residue. Residue cysteine 715 coordinates Zn(2+).

The protein belongs to the vitamin-B12 independent methionine synthase family. The cofactor is Zn(2+).

The catalysed reaction is 5-methyltetrahydropteroyltri-L-glutamate + L-homocysteine = tetrahydropteroyltri-L-glutamate + L-methionine. It participates in amino-acid biosynthesis; L-methionine biosynthesis via de novo pathway; L-methionine from L-homocysteine (MetE route): step 1/1. Its function is as follows. Catalyzes the transfer of a methyl group from 5-methyltetrahydrofolate to homocysteine resulting in methionine formation. In Staphylococcus aureus (strain MRSA252), this protein is 5-methyltetrahydropteroyltriglutamate--homocysteine methyltransferase.